Here is a 529-residue protein sequence, read N- to C-terminus: Bifunctional purine biosynthesis protein PurH (529 aa).

Residues 1–148 (MQQRRPVRRA…KNHKDVAIVV (148 aa)) enclose the MGS-like domain.

The protein belongs to the PurH family.

The enzyme catalyses (6R)-10-formyltetrahydrofolate + 5-amino-1-(5-phospho-beta-D-ribosyl)imidazole-4-carboxamide = 5-formamido-1-(5-phospho-D-ribosyl)imidazole-4-carboxamide + (6S)-5,6,7,8-tetrahydrofolate. The catalysed reaction is IMP + H2O = 5-formamido-1-(5-phospho-D-ribosyl)imidazole-4-carboxamide. It participates in purine metabolism; IMP biosynthesis via de novo pathway; 5-formamido-1-(5-phospho-D-ribosyl)imidazole-4-carboxamide from 5-amino-1-(5-phospho-D-ribosyl)imidazole-4-carboxamide (10-formyl THF route): step 1/1. The protein operates within purine metabolism; IMP biosynthesis via de novo pathway; IMP from 5-formamido-1-(5-phospho-D-ribosyl)imidazole-4-carboxamide: step 1/1. This is Bifunctional purine biosynthesis protein PurH from Salmonella paratyphi B (strain ATCC BAA-1250 / SPB7).